A 490-amino-acid chain; its full sequence is Beta-1,3-glucan-binding protein 1 (490 aa).

Residues 1 to 19 (MYKQTVVIFLLCFFICVSC) form the signal peptide. The 100-residue stretch at 20–119 (YEVPPAKLEA…GEWTVTGYVD (100 aa)) folds into the CBM39 domain. In terms of domain architecture, GH16 spans 152–490 (PPTSQNTYPC…QVDYVRVYAL (339 aa)). N-linked (GlcNAc...) asparagine glycosylation is present at N372.

The protein belongs to the insect beta-1,3-glucan binding protein family. As to quaternary structure, monomer. As to expression, hemolymph.

It localises to the secreted. In terms of biological role, plays a role in the recognition of invading microorganisms activating the phenoloxidase cascade. Binds specifically to beta-1,3-glucan. Binds the Aspergillus niger cell wall component alpha-1,3-glucan, a fungal pathogen-associated molecular pattern (PAMP) that activates the host immune response. The sequence is that of Beta-1,3-glucan-binding protein 1 from Galleria mellonella (Greater wax moth).